The chain runs to 224 residues: Uracil-DNA glycosylase (224 aa).

Catalysis depends on D62, which acts as the Proton acceptor.

Belongs to the uracil-DNA glycosylase (UDG) superfamily. UNG family.

The protein resides in the cytoplasm. The enzyme catalyses Hydrolyzes single-stranded DNA or mismatched double-stranded DNA and polynucleotides, releasing free uracil.. Its function is as follows. Excises uracil residues from the DNA which can arise as a result of misincorporation of dUMP residues by DNA polymerase or due to deamination of cytosine. The chain is Uracil-DNA glycosylase from Aliivibrio salmonicida (strain LFI1238) (Vibrio salmonicida (strain LFI1238)).